The following is a 528-amino-acid chain: Propionate catabolism operon regulatory protein (528 aa).

The Sigma-54 factor interaction domain maps to 218-461; that stretch reads MLGQSPQMEQ…RNMMERLALF (244 aa). 318-327 lines the ATP pocket; the sequence is AHGGTLFLDE. A DNA-binding region (H-T-H motif) is located at residues 508 to 527; the sequence is KTAAANYLGISRTTFWRRLK.

In terms of biological role, involved in the transcriptional regulation of the propionate catabolism operon. The sequence is that of Propionate catabolism operon regulatory protein (prpR) from Escherichia coli (strain K12).